Here is a 946-residue protein sequence, read N- to C-terminus: MSKKRVHELGKQLKEQGIELSNQELVEKLHALGYLEVKSHSSSLEDDQAHAAYEKILAERKPKPAPVRPSGPGFVVRKRAHVEPPTVTAPAAPPPAEPEYAEPPQAEQAYEPEPQEAQPEAAPEPVAAPEQPAEAAPLAAQAAPSPGAEAAAPAAPQAQPAQPAAPVAPPAPSAQPSAPQPAAAQPRPPQPPMPSRPPPAGYRPAPPPGARPPMSAAPGAPAQPGAAAQPPRPPVDPRTLRPTSTQAVVISRPLVPVRRVTPPTSARQQFPVAPGPRALGEVRELKVVPGSLGREREFIDVSRDKRRGRQPGRPISEEQAKSLSGKELLQAAISDRAYIPIRGKKKKPTKKGAKTQITEKAEHKKVIRIEESISVSELSQVMGVKASDLIRKLMQMGKMVTINAQIDADTAAILALEHGYTVEKKGFEVEEFIPEVEVDESKLVIRPPVVTVMGHVDHGKTSLLDAIRQADVAAGEAGGITQHIGAYSVNTPQGPITFLDTPGHEAFTAMRQRGAQVTDLVVLVVAADDGVMPQTVESIKAAKAAGVTILVAINKVDKPQAAPERVMQQLTEYELVAEQWGGTTIMLPVSARTKQGIPELLEYIALQSEVLELKANPDKLAAGRVIEAKLEKGRGPVATVLVEEGTLRVGDALVTGVHFGRVRAMMNERGEQVDNVGPGYPVEVLGLSGVPVAGDEFDVVEDEKAAKEVAQHRATKQRQKELGGVKKATLEDLFAKAKTSGQKVLNLVVKADVQGSSEAVSQALEKAATKKVGVKILESAVGAITKSDVLTAAAGNAVIVGFNTKPESEIENIASQQGVKILMFGIIYEAVDRIREEMAGLLEPIIKEKPLGKAEVRQVFNIPRVGQIAGSAVTEGVVKRAGHVRVVRDRKVIFTGKIGSLKRVKDDVREVAQGFECGIGVDGFSDVKQGDILEVYELEEIRPSLD.

Disordered regions lie at residues 58–250 (AERK…AVVI) and 301–324 (VSRD…KSLS). Low complexity-rich tracts occupy residues 102 to 165 (EPPQ…QPAA) and 174 to 185 (AQPSAPQPAAAQ). Residues 186–211 (PRPPQPPMPSRPPPAGYRPAPPPGAR) are compositionally biased toward pro residues. Low complexity predominate over residues 212–229 (PPMSAAPGAPAQPGAAAQ). Residues 445–614 (IRPPVVTVMG…ALQSEVLELK (170 aa)) enclose the tr-type G domain. Positions 454–461 (GHVDHGKT) are G1. Residue 454–461 (GHVDHGKT) coordinates GTP. The interval 479 to 483 (GITQH) is G2. The G3 stretch occupies residues 500-503 (DTPG). GTP is bound by residues 500 to 504 (DTPGH) and 554 to 557 (NKVD). The tract at residues 554-557 (NKVD) is G4. The G5 stretch occupies residues 590-592 (SAR).

This sequence belongs to the TRAFAC class translation factor GTPase superfamily. Classic translation factor GTPase family. IF-2 subfamily.

The protein resides in the cytoplasm. In terms of biological role, one of the essential components for the initiation of protein synthesis. Protects formylmethionyl-tRNA from spontaneous hydrolysis and promotes its binding to the 30S ribosomal subunits. Also involved in the hydrolysis of GTP during the formation of the 70S ribosomal complex. This Anaeromyxobacter sp. (strain K) protein is Translation initiation factor IF-2.